The primary structure comprises 121 residues: uncharacterized protein (121 aa).

Residues 10-87 (YIIIVTGVHP…EKLEVDFAFL (78 aa)) form the RRM domain. The interval 90-121 (PERAPRPSISTRSRSQSPEVQHRDRDVAMAEP) is disordered. Positions 97–108 (SISTRSRSQSPE) are enriched in polar residues. The segment covering 109–121 (VQHRDRDVAMAEP) has biased composition (basic and acidic residues).

The protein resides in the cytoplasm. Its subcellular location is the nucleus. This is an uncharacterized protein from Schizosaccharomyces pombe (strain 972 / ATCC 24843) (Fission yeast).